The primary structure comprises 341 residues: UDP-N-acetylenolpyruvoylglucosamine reductase (341 aa).

In terms of domain architecture, FAD-binding PCMH-type spans 13 to 185 (FGVEQSCLSM…TAVGLRLPKA (173 aa)). Arginine 161 is a catalytic residue. Serine 231 acts as the Proton donor in catalysis. The active site involves glutamate 327.

This sequence belongs to the MurB family. FAD is required as a cofactor.

Its subcellular location is the cytoplasm. The catalysed reaction is UDP-N-acetyl-alpha-D-muramate + NADP(+) = UDP-N-acetyl-3-O-(1-carboxyvinyl)-alpha-D-glucosamine + NADPH + H(+). It participates in cell wall biogenesis; peptidoglycan biosynthesis. Functionally, cell wall formation. This is UDP-N-acetylenolpyruvoylglucosamine reductase from Shewanella sp. (strain MR-7).